Here is a 147-residue protein sequence, read N- to C-terminus: MVHLSAEEKEAVLGLWGKVNVDEVGGEALGRLLVVYPWTQRFFESFGDLSNADAVMGNPKVKAHGKKVLQSFSDGLKHLDNLKGTFAKLSELHCDQLHVDPENFRLLGNVIVVVLARRLGHDFNPNVQAAFQKVVAGVANALAHKYH.

An N-acetylvaline modification is found at valine 2. A Globin domain is found at 3–147 (HLSAEEKEAV…VANALAHKYH (145 aa)). Serine 45 is modified (phosphoserine). The residue at position 60 (lysine 60) is an N6-acetyllysine. Histidine 64 lines the heme b pocket. N6-acetyllysine is present on lysine 83. Histidine 93 provides a ligand contact to heme b. Cysteine 94 is subject to S-nitrosocysteine. Lysine 145 carries the N6-acetyllysine modification.

Belongs to the globin family. In terms of assembly, heterotetramer of two alpha chains and two beta chains. In terms of tissue distribution, red blood cells.

Its function is as follows. Involved in oxygen transport from the lung to the various peripheral tissues. This is Hemoglobin subunit beta (HBB) from Sus scrofa (Pig).